A 304-amino-acid chain; its full sequence is GTPase Era (304 aa).

The region spanning 11-179 (YCGFIAIVGR…QKIVRKSLRE (169 aa)) is the Era-type G domain. The interval 19–26 (GRPNVGKS) is G1. Position 19 to 26 (19 to 26 (GRPNVGKS)) interacts with GTP. Residues 45 to 49 (QTTRH) are G2. A G3 region spans residues 66-69 (DTPG). GTP-binding positions include 66-70 (DTPGL) and 128-131 (NKVD). The tract at residues 128–131 (NKVD) is G4. Residues 158-160 (ISA) are G5. Positions 210-287 (TGEELPYSVT…HLELWVKVKA (78 aa)) constitute a KH type-2 domain.

The protein belongs to the TRAFAC class TrmE-Era-EngA-EngB-Septin-like GTPase superfamily. Era GTPase family. As to quaternary structure, monomer.

The protein localises to the cytoplasm. The protein resides in the cell inner membrane. An essential GTPase that binds both GDP and GTP, with rapid nucleotide exchange. Plays a role in 16S rRNA processing and 30S ribosomal subunit biogenesis and possibly also in cell cycle regulation and energy metabolism. In Actinobacillus pleuropneumoniae serotype 5b (strain L20), this protein is GTPase Era.